We begin with the raw amino-acid sequence, 377 residues long: Gastricsin (377 aa).

An N-terminal signal peptide occupies residues 1 to 5 (QLLEA). Propeptides (activation peptide) lie at residues 6 to 31 (AVVK…LGEF) and 32 to 48 (LRTH…FGDL). One can recognise a Peptidase A1 domain in the interval 62–374 (YFGEISIGTP…DLSNNRVGFA (313 aa)). The active site involves D80. Intrachain disulfides connect C93-C98 and C256-C260. Residue D265 is part of the active site. A disulfide bridge connects residues C299 and C332.

The protein belongs to the peptidase A1 family. Post-translationally, each pepsinogen is converted to corresponding pepsin at pH 2.0 in part as a result of the release of a 47 AA activation segment and in part as a result of stepwise proteolytic cleavage via an intermediate form(s).

The protein localises to the secreted. It carries out the reaction More restricted specificity than pepsin A, but shows preferential cleavage at Tyr-|-Xaa bonds. High activity on hemoglobin.. Its function is as follows. Hydrolyzes a variety of proteins. This chain is Gastricsin (PGC), found in Macaca fuscata fuscata (Japanese macaque).